Reading from the N-terminus, the 178-residue chain is UPF0302 protein BCAH187_A1683 (178 aa).

This sequence belongs to the UPF0302 family.

This Bacillus cereus (strain AH187) protein is UPF0302 protein BCAH187_A1683.